The following is a 387-amino-acid chain: 3-ketoacyl-CoA thiolase (387 aa).

Cysteine 91 functions as the Acyl-thioester intermediate in the catalytic mechanism. Active-site proton acceptor residues include histidine 343 and cysteine 373.

This sequence belongs to the thiolase-like superfamily. Thiolase family. Heterotetramer of two alpha chains (FadB) and two beta chains (FadA).

It is found in the cytoplasm. The enzyme catalyses an acyl-CoA + acetyl-CoA = a 3-oxoacyl-CoA + CoA. Its pathway is lipid metabolism; fatty acid beta-oxidation. Catalyzes the final step of fatty acid oxidation in which acetyl-CoA is released and the CoA ester of a fatty acid two carbons shorter is formed. This chain is 3-ketoacyl-CoA thiolase, found in Aeromonas hydrophila subsp. hydrophila (strain ATCC 7966 / DSM 30187 / BCRC 13018 / CCUG 14551 / JCM 1027 / KCTC 2358 / NCIMB 9240 / NCTC 8049).